The following is a 724-amino-acid chain: Solute carrier organic anion transporter family member 4C1 (724 aa).

The Cytoplasmic segment spans residues 1–105 (MKSAKGIENL…QCLQRCNTPG (105 aa)). Residues serine 15, serine 16, serine 24, serine 26, and serine 28 each carry the phosphoserine modification. Residues 24–71 (SASPSQVEVSALSSDPQRENSQPQELQKPQEPQKSPEPSLPSAPPNVS) form a disordered region. A compositionally biased stretch (polar residues) spans 25–38 (ASPSQVEVSALSSD). Residues 44–60 (SQPQELQKPQEPQKSPE) show a composition bias toward low complexity. The chain crosses the membrane as a helical span at residues 106–126 (GFLLHYCLLAVTQGIVVNGLV). Over 127 to 145 (NISISTIEKRYEMKSSLTG) the chain is Extracellular. The chain crosses the membrane as a helical span at residues 146–166 (LISSSYDISFCLLSLFVSFFG). Residues 167–172 (ERGHKP) lie on the Cytoplasmic side of the membrane. A helical transmembrane segment spans residues 173 to 197 (RWLAFAAFMIGLGALVFSLPQFFSG). At 198 to 224 (EYKLGSLFEDTCVTTRNSTSCTSSTSS) the chain is on the extracellular side. The chain crosses the membrane as a helical span at residues 225–254 (LSNYLYVFILGQLLLGAGGTPLYTLGTAFL). At 255–274 (DDSVPTHKSSLYIGTGYAMS) the chain is on the cytoplasmic side. A helical transmembrane segment spans residues 275-295 (ILGPAIGYVLGGQLLTIYVDV). Topologically, residues 296–311 (AMGESTDITEDDPRWL) are extracellular. Residues 312–336 (GAWWIGFLLSWIFAWSLIIPFSCFP) traverse the membrane as a helical segment. The Cytoplasmic segment spans residues 337–377 (KHLPGTAEIQAGKTSQAHQSNSNADAKFGKSIKDFPAALKN). Residues 378–399 (LMKNAVFMCLVLSTSSEALITT) form a helical membrane-spanning segment. Residues 400–419 (GFATFLPKFIENQFGLTSSF) are Extracellular-facing. A helical membrane pass occupies residues 420 to 443 (AATLGGAVLIPGAALGQILGGFLV). The Cytoplasmic segment spans residues 444-447 (SKFK). A helical transmembrane segment spans residues 448–471 (MTCKNTMKFALFTSGVALTLSFVF). Over 472 to 580 (IYAKCGNEPF…ETHCAKLPIF (109 aa)) the chain is Extracellular. Residues 495 to 549 (GNLIAPCNANCNCLRSYYYPVCGDGVQYFSPCFAGCSNSVAHRKPKVYYNCSCIE) form the Kazal-like domain. Intrachain disulfides connect cysteine 501-cysteine 530, cysteine 507-cysteine 526, and cysteine 516-cysteine 547. A helical transmembrane segment spans residues 581 to 603 (LCIFFIVIIFTFMAGTPITVSIL). Residues 604–612 (RCVNHRQRS) lie on the Cytoplasmic side of the membrane. The helical transmembrane segment at 613–638 (LALGIQFMVLRLLGTIPGPIIFGFTI) threads the bilayer. Topologically, residues 639-672 (DSTCILWDINDCGIKGACRIYDNIKMAHMLVAIS) are extracellular. Residues 673–690 (VTCKVITMFFNGFAIFLY) traverse the membrane as a helical segment. Topologically, residues 691–724 (KPPPSATDLSFHKENAVVTNVLAEQDLNKIVKEG) are cytoplasmic.

This sequence belongs to the organo anion transporter (TC 2.A.60) family.

The protein resides in the basolateral cell membrane. It catalyses the reaction estrone 3-sulfate(out) = estrone 3-sulfate(in). The enzyme catalyses L-thyroxine(out) = L-thyroxine(in). It carries out the reaction 3,3',5-triiodo-L-thyronine(out) = 3,3',5-triiodo-L-thyronine(in). The catalysed reaction is chenodeoxycholate(out) = chenodeoxycholate(in). It catalyses the reaction glycocholate(out) = glycocholate(in). The enzyme catalyses L-homoarginine(in) = L-homoarginine(out). It carries out the reaction L-arginine(in) = L-arginine(out). The catalysed reaction is N(omega),N(omega)-dimethyl-L-arginine(out) = N(omega),N(omega)-dimethyl-L-arginine(in). Functionally, mediates the transport of organic anions such as steroids (estrone 3-sulfate, chenodeoxycholate, glycocholate) and thyroid hormones (3,3',5-triiodo-L-thyronine (T3), L-thyroxine (T4)), in the kidney. Capable of transporting cAMP and pharmacological substances such as digoxin, ouabain and methotrexate. Transport is independent of sodium, chloride ion, and ATP. Transport activity is stimulated by an acidic extracellular environment due to increased substrate affinity to the transporter. The driving force for this transport activity is currently not known. The role of hydrogencarbonate (HCO3(-), bicarbonate) as the probable counteranion that exchanges for organic anions is still not well defined. Functions as an uptake transporter at the apical membrane, suggesting a role in renal reabsorption. Involved in the renal secretion of the uremic toxin ADMA (N(omega),N(omega)-dimethyl-L-arginine or asymmetrical dimethylarginine), which is associated to cardiovascular events and mortality, and the structurally related amino acids L-arginine and L-homoarginine (a cardioprotective biomarker). Can act bidirectionally, suggesting a dual protective role of this transport protein; exporting L-homoarginine after being synthesized in proximal tubule cells, and mediating uptake of ADMA from the blood into proximal tubule cells where it is degraded by the enzyme dimethylarginine dimethylaminohydrolase 1 (DDAH1). May be involved in sperm maturation by enabling directed movement of organic anions and compounds within or between cells. This ion-transporting process is important to maintain the strict epididymal homeostasis necessary for sperm maturation. May have a role in secretory functions since seminal vesicle epithelial cells are assumed to secrete proteins involved in decapacitation by modifying surface proteins to facilitate the acquisition of the ability to fertilize the egg. The polypeptide is Solute carrier organic anion transporter family member 4C1 (Pongo abelii (Sumatran orangutan)).